Consider the following 104-residue polypeptide: ATP-dependent Clp protease adapter protein ClpS (104 aa).

Residues 1 to 20 form a disordered region; the sequence is MAEETPTRSPGGAAVLDKAP.

The protein belongs to the ClpS family. In terms of assembly, binds to the N-terminal domain of the chaperone ClpA.

Involved in the modulation of the specificity of the ClpAP-mediated ATP-dependent protein degradation. The polypeptide is ATP-dependent Clp protease adapter protein ClpS (Synechococcus sp. (strain CC9902)).